A 622-amino-acid chain; its full sequence is MPATPNNVPEPSRTDPALIRNFCIIAHIDHGKSTLADRMLQLTGVVDQRQMRAQYLDRMDIERERGITIKSQAVRLPWAPTQEPGNTHILNMIDTPGHVDFTYEVSRSLAACEGTVLLVDAAQGIEAQTLANLYLAMENDLKIIPVLNKIDLPAAQPEKFSEELANLIGCDPEDVLKVSAKTGLGVEALLDKVVAEVPAPVGVADAPARAMIFDSVYDSYRGVVTYVRVIDGQLNKRERIRMMSTGATHELLEIGVSSPEMKPADGLGVGEVGYLITGVKDVRQSKVGDTITTLNKGATEALGGYKDPKPMVFSGLYPLDGSDYPELRDALDKLQLNDAALVYEPETSAALGFGFRVGFLGLLHLDVIRERLEREFGLDLIATAPNVVYRVLMEDGSEHTVTNPSEFPEGKISEVYEPVVRATILAPSEFIGSIMELCQTRRGTLLGMDYLSEDRVEIRYTLPLAEIVFDFFDQLKSKTRGYASLDYEPTGEQASSLVKVDILLHGDKVDAFSAITHKDAAYAYGVRLVAKLRELIPRQAFEVPIQAAIGSRVIARETIRAIRKDVLAKCYGGDISRKRKLLEKQKEGKKRMKMVGSVEVPQEAFIAVLSSDDSGGSAKGKK.

A tr-type G domain is found at 17-201 (ALIRNFCIIA…KVVAEVPAPV (185 aa)). GTP is bound by residues 29–34 (DHGKST) and 148–151 (NKID).

The protein belongs to the TRAFAC class translation factor GTPase superfamily. Classic translation factor GTPase family. LepA subfamily.

It localises to the cell membrane. It carries out the reaction GTP + H2O = GDP + phosphate + H(+). Functionally, required for accurate and efficient protein synthesis under certain stress conditions. May act as a fidelity factor of the translation reaction, by catalyzing a one-codon backward translocation of tRNAs on improperly translocated ribosomes. Back-translocation proceeds from a post-translocation (POST) complex to a pre-translocation (PRE) complex, thus giving elongation factor G a second chance to translocate the tRNAs correctly. Binds to ribosomes in a GTP-dependent manner. The sequence is that of Elongation factor 4 from Streptomyces avermitilis (strain ATCC 31267 / DSM 46492 / JCM 5070 / NBRC 14893 / NCIMB 12804 / NRRL 8165 / MA-4680).